We begin with the raw amino-acid sequence, 143 residues long: 3-hydroxyacyl-[acyl-carrier-protein] dehydratase FabZ (143 aa).

Residue histidine 48 is part of the active site.

The protein belongs to the thioester dehydratase family. FabZ subfamily.

It is found in the cytoplasm. The catalysed reaction is a (3R)-hydroxyacyl-[ACP] = a (2E)-enoyl-[ACP] + H2O. Functionally, involved in unsaturated fatty acids biosynthesis. Catalyzes the dehydration of short chain beta-hydroxyacyl-ACPs and long chain saturated and unsaturated beta-hydroxyacyl-ACPs. This chain is 3-hydroxyacyl-[acyl-carrier-protein] dehydratase FabZ, found in Roseiflexus sp. (strain RS-1).